We begin with the raw amino-acid sequence, 60 residues long: Large ribosomal subunit protein bL32 (60 aa).

Residues 1-21 are disordered; it reads MAVPARHTSKAKKNKRRTHYK. Residues 7-20 are compositionally biased toward basic residues; it reads HTSKAKKNKRRTHY.

The protein belongs to the bacterial ribosomal protein bL32 family.

The chain is Large ribosomal subunit protein bL32 from Streptococcus thermophilus (strain ATCC BAA-250 / LMG 18311).